The primary structure comprises 1578 residues: Pentafunctional AROM polypeptide (1578 aa).

The tract at residues 1–384 (MAEPTKIKIL…YEPKASVVPN (384 aa)) is 3-dehydroquinate synthase. NAD(+) contacts are provided by residues 44–46 (DTN), 81–84 (EVSK), 114–116 (GGV), and Asp119. 7-phospho-2-dehydro-3-deoxy-D-arabino-heptonate is bound at residue Arg130. 139 to 140 (TT) is a binding site for NAD(+). 2 residues coordinate 7-phospho-2-dehydro-3-deoxy-D-arabino-heptonate: Asp146 and Lys152. NAD(+) is bound at residue Lys161. Residue Asn162 coordinates 7-phospho-2-dehydro-3-deoxy-D-arabino-heptonate. NAD(+) is bound by residues 179-182 (FLET) and Asn190. Residue Glu194 participates in Zn(2+) binding. 7-phospho-2-dehydro-3-deoxy-D-arabino-heptonate-binding positions include 194–197 (EVIK) and Lys250. The active-site Proton acceptor; for 3-dehydroquinate synthase activity is Glu260. Residues 264–268 (RNLLN) and His271 each bind 7-phospho-2-dehydro-3-deoxy-D-arabino-heptonate. A Zn(2+)-binding site is contributed by His271. The active-site Proton acceptor; for 3-dehydroquinate synthase activity is His275. 2 residues coordinate 7-phospho-2-dehydro-3-deoxy-D-arabino-heptonate: His287 and Lys356. His287 serves as a coordination point for Zn(2+). The interval 397–842 (VHPGVEPASN…WDTLRQKFSA (446 aa)) is EPSP synthase. Catalysis depends on Cys824, which acts as the For EPSP synthase activity. The tract at residues 864–1055 (TASVFIIGMR…KRKKHSFFVS (192 aa)) is shikimate kinase. ATP is bound at residue 871–878 (GMRGAGKT). The 3-dehydroquinase stretch occupies residues 1056-1276 (LTLPDLRTAG…AAPGQLSATE (221 aa)). Catalysis depends on His1179, which acts as the Proton acceptor; for 3-dehydroquinate dehydratase activity. Lys1207 serves as the catalytic Schiff-base intermediate with substrate; for 3-dehydroquinate dehydratase activity. Positions 1289–1578 (QKKFAVFGTP…EDARAAVLSS (290 aa)) are shikimate dehydrogenase.

This sequence in the N-terminal section; belongs to the sugar phosphate cyclases superfamily. Dehydroquinate synthase family. The protein in the 2nd section; belongs to the EPSP synthase family. It in the 3rd section; belongs to the shikimate kinase family. In the 4th section; belongs to the type-I 3-dehydroquinase family. This sequence in the C-terminal section; belongs to the shikimate dehydrogenase family. Homodimer. The cofactor is Zn(2+).

The protein resides in the cytoplasm. The catalysed reaction is 7-phospho-2-dehydro-3-deoxy-D-arabino-heptonate = 3-dehydroquinate + phosphate. The enzyme catalyses 3-dehydroquinate = 3-dehydroshikimate + H2O. It carries out the reaction shikimate + NADP(+) = 3-dehydroshikimate + NADPH + H(+). It catalyses the reaction shikimate + ATP = 3-phosphoshikimate + ADP + H(+). The catalysed reaction is 3-phosphoshikimate + phosphoenolpyruvate = 5-O-(1-carboxyvinyl)-3-phosphoshikimate + phosphate. It participates in metabolic intermediate biosynthesis; chorismate biosynthesis; chorismate from D-erythrose 4-phosphate and phosphoenolpyruvate: step 2/7. The protein operates within metabolic intermediate biosynthesis; chorismate biosynthesis; chorismate from D-erythrose 4-phosphate and phosphoenolpyruvate: step 3/7. Its pathway is metabolic intermediate biosynthesis; chorismate biosynthesis; chorismate from D-erythrose 4-phosphate and phosphoenolpyruvate: step 4/7. It functions in the pathway metabolic intermediate biosynthesis; chorismate biosynthesis; chorismate from D-erythrose 4-phosphate and phosphoenolpyruvate: step 5/7. It participates in metabolic intermediate biosynthesis; chorismate biosynthesis; chorismate from D-erythrose 4-phosphate and phosphoenolpyruvate: step 6/7. Functionally, the AROM polypeptide catalyzes 5 consecutive enzymatic reactions in prechorismate polyaromatic amino acid biosynthesis. The polypeptide is Pentafunctional AROM polypeptide (Aspergillus flavus (strain ATCC 200026 / FGSC A1120 / IAM 13836 / NRRL 3357 / JCM 12722 / SRRC 167)).